Consider the following 307-residue polypeptide: UPF0276 protein PM0211 (307 aa).

The protein belongs to the UPF0276 family.

The protein is UPF0276 protein PM0211 of Pasteurella multocida (strain Pm70).